Here is a 620-residue protein sequence, read N- to C-terminus: Lamin-B2 (620 aa).

The segment at 1–38 (MSPPSPGRRREQRRPRAAATMATPLPGRAGGPATPLSP) is disordered. The segment at 1–48 (MSPPSPGRRREQRRPRAAATMATPLPGRAGGPATPLSPTRLSRLQEKE) is head. 2 positions are modified to phosphothreonine: threonine 23 and threonine 34. At serine 37 the chain carries Phosphoserine. The IF rod domain maps to 46 to 402 (EKEELRELND…KLLEGEEERL (357 aa)). The tract at residues 49–83 (ELRELNDRLAHYIDRVRALELENDRLLLKISEKEE) is coil 1A. Lysine 77 is covalently cross-linked (Glycyl lysine isopeptide (Lys-Gly) (interchain with G-Cter in SUMO2)). Residue lysine 81 is modified to N6-acetyllysine; alternate. A Glycyl lysine isopeptide (Lys-Gly) (interchain with G-Cter in SUMO2); alternate cross-link involves residue lysine 81. The segment at 84 to 95 (VTTREVSGIKAL) is linker 1. Residues 96–229 (YESELADARR…DFRKSVFEEE (134 aa)) are coil 1B. Residues lysine 195 and lysine 255 each participate in a glycyl lysine isopeptide (Lys-Gly) (interchain with G-Cter in SUMO2) cross-link. Residues 230–256 (VRETRRRHERRLVEVDSSRQQEYDFKM) are linker 2. The coil 2 stretch occupies residues 257-400 (AQALEELRSQ…YRKLLEGEEE (144 aa)). Residues serine 316 and serine 407 each carry the phosphoserine modification. The segment at 399–464 (EERLKLSPSP…GTGGSGGFHL (66 aa)) is disordered. Residues 401-620 (RLKLSPSPSS…RTTSRGCYVM (220 aa)) are tail. Low complexity predominate over residues 404–431 (LSPSPSSRVTVSRATSSSSGSLSATGRL). The O-linked (GlcNAc) threonine glycan is linked to threonine 413. 4 positions are modified to phosphoserine: serine 420, serine 422, serine 424, and serine 426. Residue arginine 433 is modified to Omega-N-methylarginine. A Nuclear localization signal motif is present at residues 435 to 440 (KRKRLE). Low complexity predominate over residues 444–453 (PLGSGPSVLG). The 118-residue stretch at 462–579 (FHLAQQASAS…EEVAMRTVKK (118 aa)) folds into the LTD domain. Lysine 489 is covalently cross-linked (Glycyl lysine isopeptide (Lys-Gly) (interchain with G-Cter in SUMO2)). Serine 497 is subject to Phosphoserine. Positions 581–620 (SVMRENENGEEEEEEAEFGEEDLFHQQGDPRTTSRGCYVM) are disordered. Residues 588–601 (NGEEEEEEAEFGEE) are compositionally biased toward acidic residues. Over residues 609–620 (DPRTTSRGCYVM) the composition is skewed to polar residues. A Cysteine methyl ester modification is found at cysteine 617. Residue cysteine 617 is the site of S-farnesyl cysteine attachment. Residues 618 to 620 (YVM) constitute a propeptide, removed in mature form.

This sequence belongs to the intermediate filament family. As to quaternary structure, dimer. Lamin dimers then assemble into dimeric head-to-tail polymers. Ultimately, two head-to-tail polymers assemble laterally into a protofilament with a uniformly shaped rod of 3.5 nm in diameter. Interacts with TMEM43. B-type lamins undergo a series of modifications, such as farnesylation and phosphorylation. Increased phosphorylation of the lamins occurs before envelope disintegration and probably plays a role in regulating lamin associations. Post-translationally, phosphorylation plays a key role in lamin organization, subcellular localization and nuclear envelope disintegration. Phosphorylation by CDK1 at Ser-37 and Ser-407 at the onset of mitosis drives lamin disassembly and nuclear envelope breakdown.

The protein localises to the nucleus lamina. Its function is as follows. Lamins are intermediate filament proteins that assemble into a filamentous meshwork, and which constitute the major components of the nuclear lamina, a fibrous layer on the nucleoplasmic side of the inner nuclear membrane. Lamins provide a framework for the nuclear envelope, bridging the nuclear envelope and chromatin, thereby playing an important role in nuclear assembly, chromatin organization, nuclear membrane and telomere dynamics. The structural integrity of the lamina is strictly controlled by the cell cycle, as seen by the disintegration and formation of the nuclear envelope in prophase and telophase, respectively. This Homo sapiens (Human) protein is Lamin-B2 (LMNB2).